We begin with the raw amino-acid sequence, 203 residues long: High-molecular weight cobalt-containing nitrile hydratase subunit alpha (203 aa).

Co(3+) contacts are provided by Cys102, Cys105, Ser106, and Cys107.

The protein belongs to the nitrile hydratase subunit alpha family. As to quaternary structure, heterodimer of an alpha and a beta chain. Co(3+) is required as a cofactor.

The enzyme catalyses an aliphatic primary amide = an aliphatic nitrile + H2O. Functionally, NHase catalyzes the hydration of various nitrile compounds to the corresponding amides. This Rhodococcus rhodochrous protein is High-molecular weight cobalt-containing nitrile hydratase subunit alpha (nhhA).